A 176-amino-acid chain; its full sequence is Ferredoxin-type protein NapF (176 aa).

4Fe-4S ferredoxin-type domains are found at residues 39–68 and 71–100; these read VENSIFVARCTRCGDCLSVCETNILVKGDA and PEVRFDNGECTFCGKCVDACKQPIFYPRDQ. [4Fe-4S] cluster is bound by residues Cys48, Cys51, Cys54, Cys58, Cys80, Cys83, Cys86, Cys90, Cys113, Cys121, Cys124, Cys128, Cys152, Cys155, Cys158, and Cys162. 4Fe-4S ferredoxin-type domains are found at residues 119 to 138 and 143 to 172; these read IECRTCQDNCPANAIRFKLQ and AQPLVNFDACNGCGACVQGCPVNAITMNDL.

It belongs to the NapF family. In terms of assembly, interacts with the cytoplasmic NapA precursor. Requires [4Fe-4S] cluster as cofactor.

Its subcellular location is the cytoplasm. In terms of biological role, could be involved in the maturation of NapA, the catalytic subunit of the periplasmic nitrate reductase, before its export into the periplasm. The chain is Ferredoxin-type protein NapF from Haemophilus influenzae (strain ATCC 51907 / DSM 11121 / KW20 / Rd).